The primary structure comprises 217 residues: 3,4-dihydroxy-2-butanone 4-phosphate synthase (217 aa).

Residues 37–38 (RE), Asp-42, 150–154 (RRGHT), and Glu-174 each bind D-ribulose 5-phosphate. Residue Glu-38 participates in Mg(2+) binding. A Mg(2+)-binding site is contributed by His-153.

Belongs to the DHBP synthase family. Homodimer. Mg(2+) is required as a cofactor. Mn(2+) serves as cofactor.

The catalysed reaction is D-ribulose 5-phosphate = (2S)-2-hydroxy-3-oxobutyl phosphate + formate + H(+). The protein operates within cofactor biosynthesis; riboflavin biosynthesis; 2-hydroxy-3-oxobutyl phosphate from D-ribulose 5-phosphate: step 1/1. Catalyzes the conversion of D-ribulose 5-phosphate to formate and 3,4-dihydroxy-2-butanone 4-phosphate. The polypeptide is 3,4-dihydroxy-2-butanone 4-phosphate synthase (Aeromonas salmonicida (strain A449)).